The chain runs to 319 residues: Ficolin-2 (319 aa).

Residues methionine 1–alanine 22 form the signal peptide. Positions glycine 45–serine 101 constitute a Collagen-like domain. A disordered region spans residues leucine 53–threonine 106. A compositionally biased stretch (basic and acidic residues) spans lysine 83–aspartate 97. The Fibrinogen C-terminal domain maps to glutamine 102–isoleucine 319. 2 disulfide bridges follow: cysteine 104/cysteine 132 and cysteine 111/cysteine 139. The Ca(2+) site is built by aspartate 255, aspartate 257, and serine 261. A disulfide bridge links cysteine 263 with cysteine 276. N-linked (GlcNAc...) asparagine glycosylation is present at asparagine 306.

This sequence belongs to the ficolin lectin family. As to quaternary structure, homotrimer. Interacts with elastin. Interacts with MASP1 and MASP2.

Its subcellular location is the secreted. May function in innate immunity through activation of the lectin complement pathway. Calcium-dependent and GlcNAc-binding lectin. This is Ficolin-2 (Fcn2) from Rattus norvegicus (Rat).